The chain runs to 412 residues: MIGMLESLQHESDLLQHDQIHTGEKPYECNECRKTFSLKQNLVEHKKMHTGEKSHECTECGKVCSRVSSLTLHLRSHTGKKAYKCNKCGKAFSQKENFLSHQKHHTGEKPYECEKVSIQMPTIIRHQKNHTGTKPYACKECGKAFNGKAYLTEHEKIHTGEKPFECNQCGRAFSQKQYLIKHQNIHTGKKPFKCSECGKAFSQKENLIIHQRIHTGEKPYECKGCGKAFIQKSSLIRHQRSHTGEKPYTCKECGKAFSGKSNLTEHEKIHIGEKPYKCNECGTIFRQKQYLIKHHNIHTGEKPYECNKCGKAFSRITSLIVHVRIHTGDKPYECKVCGKAFCQSSSLTVHMRSHTGEKPYGCNECGKAFSQFSTLALHMRIHTGEKPYQCSECGKAFSQKSHHIRHQRIHTH.

13 consecutive C2H2-type zinc fingers follow at residues 27–49, 55–77, 83–105, 136–158, 164–186, 192–214, 220–242, 248–270, 276–298, 304–326, 332–354, 360–382, and 388–412; these read YECN…KKMH, HECT…LRSH, YKCN…QKHH, YACK…EKIH, FECN…QNIH, FKCS…QRIH, YECK…QRSH, YTCK…EKIH, YKCN…HNIH, YECN…VRIH, YECK…MRSH, YGCN…MRIH, and YQCS…IHTH.

Belongs to the krueppel C2H2-type zinc-finger protein family. Binds DNA. Interacts with GATA4.

It localises to the nucleus. In terms of biological role, transcription factor that acts as a cardiac regulator and an effector of alpha1-adrenergic signaling. Binds to PE response elements (PERE) present in the promoter of genes such as ANF/NPPA and acts as a direct transcriptional activator of NPPA. Also acts as a cofactor with GATA4, a key cardiac regulator. This Homo sapiens (Human) protein is Zinc finger protein 260 (ZNF260).